A 171-amino-acid chain; its full sequence is UPF0763 protein HPSH_03535 (171 aa).

The protein belongs to the UPF0763 family.

The chain is UPF0763 protein HPSH_03535 from Helicobacter pylori (strain Shi470).